The chain runs to 999 residues: Multiple C2 and transmembrane domain-containing protein 1 (999 aa).

Residues 1 to 19 (MEPRAAAAGEPEPPAASSS) are compositionally biased toward low complexity. The disordered stretch occupies residues 1 to 241 (MEPRAAAAGE…TGEEHGSSQK (241 aa)). The segment covering 34–44 (RSKGGGGGRAG) has biased composition (gly residues). The span at 65 to 79 (GNAPARGSGAGSRWS) shows a compositional bias: low complexity. A compositionally biased stretch (polar residues) spans 92–101 (FSSSQPNLCC). Low complexity-rich tracts occupy residues 131 to 141 (PAVKGPAAASG) and 149 to 169 (GGRS…LSSS). Basic and acidic residues-rich tracts occupy residues 175–185 (RGDRARDEGAR) and 228–238 (RAPETGEEHGS). 3 C2 domains span residues 242–360 (IINT…DVTL), 452–569 (QTQS…KLEL), and 603–724 (QKER…AYVL). Positions 277, 283, 330, 332, 338, 486, 492, 539, 541, 547, 642, 648, 694, 696, and 702 each coordinate Ca(2+). 2 helical membrane passes run 811 to 831 (FVLF…LVLL) and 914 to 934 (PFLS…LYCI).

The protein belongs to the MCTP family. It depends on Ca(2+) as a cofactor.

Its subcellular location is the cytoplasmic vesicle. It localises to the secretory vesicle. The protein resides in the synaptic vesicle membrane. It is found in the recycling endosome. The protein localises to the endoplasmic reticulum membrane. Its function is as follows. Calcium sensor which is essential for the stabilization of normal baseline neurotransmitter release and for the induction and long-term maintenance of presynaptic homeostatic plasticity. This is Multiple C2 and transmembrane domain-containing protein 1 (MCTP1) from Homo sapiens (Human).